Consider the following 282-residue polypeptide: 4-diphosphocytidyl-2-C-methyl-D-erythritol kinase (282 aa).

Lysine 11 is a catalytic residue. 95 to 105 (PMGGGVGGGSS) contributes to the ATP binding site. Residue aspartate 137 is part of the active site.

Belongs to the GHMP kinase family. IspE subfamily.

It catalyses the reaction 4-CDP-2-C-methyl-D-erythritol + ATP = 4-CDP-2-C-methyl-D-erythritol 2-phosphate + ADP + H(+). It participates in isoprenoid biosynthesis; isopentenyl diphosphate biosynthesis via DXP pathway; isopentenyl diphosphate from 1-deoxy-D-xylulose 5-phosphate: step 3/6. Its function is as follows. Catalyzes the phosphorylation of the position 2 hydroxy group of 4-diphosphocytidyl-2C-methyl-D-erythritol. This chain is 4-diphosphocytidyl-2-C-methyl-D-erythritol kinase, found in Haemophilus ducreyi (strain 35000HP / ATCC 700724).